We begin with the raw amino-acid sequence, 229 residues long: Coiled-coil domain-containing protein 134 (229 aa).

The signal sequence occupies residues 1 to 22 (MDLLQFLAAFSVLLWPGTEVTG). An N-linked (GlcNAc...) asparagine glycan is attached at asparagine 148. A disordered region spans residues 182–229 (FKTDQTEFIPSTDPFQKALREEEKRRKKEERRKEIRKGPRISRSQSEL). Residues 196 to 218 (FQKALREEEKRRKKEERRKEIRK) adopt a coiled-coil conformation. Positions 226-229 (QSEL) match the Prevents secretion from ER motif.

The protein belongs to the CCDC134 family. In terms of assembly, interacts with TADA2A. Associates with the PCAF complex via TADA2A binding. In terms of processing, O-glycosylated, with additional sialic acid modifications.

Its subcellular location is the endoplasmic reticulum lumen. The protein resides in the secreted. It is found in the cytoplasm. It localises to the nucleus. Functionally, molecular adapter required to prevent protein hyperglycosylation of HSP90B1: during translation, associates with nascent HSP90B1 and the STT3A catalytic component of the OST-A complex and tethers them to a specialized translocon that forms a microenvironment for HSP90B1 folding. In the CCDC134-containing translocon, STT3A associates with the SRT pseudosubstrate motif of HSP90B1, preventing access to facultative glycosylation sites until folding is completed, preventing hyperglycosylation and subsequent degradation of HSP90B1. In extracellular secreted form, promotes proliferation and activation of CD8(+) T-cells, suggesting a cytokine-like function. May inhibit ERK and JNK signaling activity. May suppress cell migration and invasion activity, via its effects on ERK and JNK signaling. May also localize in the nucleus: enhances stability of the PCAF histone acetyltransferase (HAT) complex member TADA2A and thus promotes PCAF-mediated histone acetyltransferase activity. Has a critical role in the regulation of osteogenesis and bone development. The sequence is that of Coiled-coil domain-containing protein 134 (Ccdc134) from Mus musculus (Mouse).